Consider the following 320-residue polypeptide: Cytochrome f (320 aa).

The signal sequence occupies residues 1-35 (MQTRNTFSWIREEITRSISVSLIIYIITRASISSA). Residues Y36, C56, C59, and H60 each coordinate heme. The helical transmembrane segment at 286–306 (VQGLLFFLASVVLAQIFLVLK) threads the bilayer.

It belongs to the cytochrome f family. As to quaternary structure, the 4 large subunits of the cytochrome b6-f complex are cytochrome b6, subunit IV (17 kDa polypeptide, petD), cytochrome f and the Rieske protein, while the 4 small subunits are PetG, PetL, PetM and PetN. The complex functions as a dimer. It depends on heme as a cofactor.

Its subcellular location is the plastid. The protein localises to the chloroplast thylakoid membrane. Its function is as follows. Component of the cytochrome b6-f complex, which mediates electron transfer between photosystem II (PSII) and photosystem I (PSI), cyclic electron flow around PSI, and state transitions. The sequence is that of Cytochrome f from Draba nemorosa (Woodland whitlowgrass).